Here is a 107-residue protein sequence, read N- to C-terminus: Probable monothiol glutaredoxin 2 (107 aa).

The Glutaredoxin domain occupies 7-107 (LEFIQNAIKK…LEKMLKDVVV (101 aa)). Glutathione is bound at residue Lys-24. Residue Cys-32 participates in [2Fe-2S] cluster binding. Glutathione-binding positions include Arg-61, Phe-73, and 86–87 (CD).

It belongs to the glutaredoxin family. Monothiol subfamily.

This is Probable monothiol glutaredoxin 2 (grxC2) from Rickettsia prowazekii (strain Madrid E).